The sequence spans 190 residues: Probable GTP-binding protein EngB (190 aa).

The EngB-type G domain occupies 22 to 190 (VKREVAFAGR…LNELLKILIP (169 aa)). Residues 30–37 (GRSNVGKS), 56–60 (GKTRS), 74–77 (DLPG), 141–144 (TKTD), and 173–175 (FSA) contribute to the GTP site. Mg(2+) contacts are provided by Ser37 and Thr58.

It belongs to the TRAFAC class TrmE-Era-EngA-EngB-Septin-like GTPase superfamily. EngB GTPase family. It depends on Mg(2+) as a cofactor.

In terms of biological role, necessary for normal cell division and for the maintenance of normal septation. In Kosmotoga olearia (strain ATCC BAA-1733 / DSM 21960 / TBF 19.5.1), this protein is Probable GTP-binding protein EngB.